We begin with the raw amino-acid sequence, 148 residues long: Protein F15 (148 aa).

It belongs to the poxviridae F15 protein family.

In Fowlpox virus (strain NVSL) (FPV), this protein is Protein F15.